The sequence spans 901 residues: Quinate repressor protein (901 aa).

Residues 1 to 88 (MSILVRPPKR…DSLQTRRKFP (88 aa)) are sufficient for repression. Disordered stretches follow at residues 26–59 (LRDFGQGNSASTPINTSADYGRFDERPGSGDGSR) and 878–901 (EEQGEEYDQSAMRTRLENLDGQPM). Residues 31–43 (QGNSASTPINTSA) show a composition bias toward polar residues.

In the N-terminal section; belongs to the shikimate kinase family. This sequence in the 2nd section; belongs to the type-I 3-dehydroquinase family. It in the C-terminal section; belongs to the shikimate dehydrogenase family. In terms of assembly, interacts with qutA; transcriptional activator of the quinate utilization pathway genes.

Its function is as follows. Multi-domain repressor protein that negatively regulates transcription of the quinate utilization pathway genes. May mediate its repressor activity by binding directly to the qutA activator protein. The chain is Quinate repressor protein (qutR) from Emericella nidulans (strain FGSC A4 / ATCC 38163 / CBS 112.46 / NRRL 194 / M139) (Aspergillus nidulans).